We begin with the raw amino-acid sequence, 882 residues long: Alanine--tRNA ligase (882 aa).

Residues His570, His574, Cys672, and His676 each contribute to the Zn(2+) site.

It belongs to the class-II aminoacyl-tRNA synthetase family. Zn(2+) is required as a cofactor.

The protein resides in the cytoplasm. It catalyses the reaction tRNA(Ala) + L-alanine + ATP = L-alanyl-tRNA(Ala) + AMP + diphosphate. Its function is as follows. Catalyzes the attachment of alanine to tRNA(Ala) in a two-step reaction: alanine is first activated by ATP to form Ala-AMP and then transferred to the acceptor end of tRNA(Ala). Also edits incorrectly charged Ser-tRNA(Ala) and Gly-tRNA(Ala) via its editing domain. In Xanthomonas axonopodis pv. citri (strain 306), this protein is Alanine--tRNA ligase.